We begin with the raw amino-acid sequence, 481 residues long: MRHSKRTHCPDWDSRESWGHESYSGSHKRKRRSHSSTQENRHCKPHHQFKDSDCHYLEARCLNERDYRDRRYIDEYRNDYCEGYVPRHYHRDVESTYRIHCSKSSVRSRRSSPKRKRNRPCASHQSHSKSHRRKRSRSIEDDEEGHLICQSGDVLRARYEIVDTLGEGAFGKVVECIDHGMDGLHVAVKIVKNVGRYREAARSEIQVLEHLNSTDPNSVFRCVQMLEWFDHHGHVCIVFELLGLSTYDFIKENSFLPFQIDHIRQMAYQICQSINFLHHNKLTHTDLKPENILFVKSDYVVKYNSKMKRDERTLKNTDIKVVDFGSATYDDEHHSTLVSTRHYRAPEVILALGWSQPCDVWSIGCILIEYYLGFTVFQTHDSKEHLAMMERILGPIPAHMIQKTRKRKYFHHNQLDWDEHSSAGRYVRRRCKPLKEFMLCHDEEHEKLFDLVRRMLEYDPARRITLDEALQHPFFDLLKRK.

2 disordered regions span residues 1–47 (MRHS…KPHH) and 102–143 (SKSS…EDDE). The span at 8 to 19 (HCPDWDSRESWG) shows a compositional bias: basic and acidic residues. Basic residues-rich tracts occupy residues 106–119 (VRSR…KRNR) and 126–136 (SHSKSHRRKRS). Residues Ser-136 and Ser-138 each carry the phosphoserine modification. Positions 159–475 (YEIVDTLGEG…LDEALQHPFF (317 aa)) constitute a Protein kinase domain. ATP is bound by residues 165–173 (LGEGAFGKV) and Lys-189. Asp-286 (proton acceptor) is an active-site residue.

Belongs to the protein kinase superfamily. CMGC Ser/Thr protein kinase family. Lammer subfamily. As to quaternary structure, interacts with UBL5. Post-translationally, autophosphorylates on all three types of residues. Expressed in the hippocampus, the cerebellum and the olfactory bulb.

It is found in the nucleus. It catalyses the reaction L-seryl-[protein] + ATP = O-phospho-L-seryl-[protein] + ADP + H(+). The enzyme catalyses L-threonyl-[protein] + ATP = O-phospho-L-threonyl-[protein] + ADP + H(+). The catalysed reaction is L-tyrosyl-[protein] + ATP = O-phospho-L-tyrosyl-[protein] + ADP + H(+). With respect to regulation, TG003 inhibits its kinase activity and affects the regulation of alternative splicing mediated by phosphorylation of SR proteins. Functionally, dual specificity kinase acting on both serine/threonine and tyrosine-containing substrates. Phosphorylates serine- and arginine-rich (SR) proteins of the spliceosomal complex and may be a constituent of a network of regulatory mechanisms that enable SR proteins to control RNA splicing. Phosphorylates SRSF1 and SRSF3. Required for the regulation of alternative splicing of MAPT/TAU. Regulates the alternative splicing of tissue factor (F3) pre-mRNA in endothelial cells. In Mus musculus (Mouse), this protein is Dual specificity protein kinase CLK4 (Clk4).